The sequence spans 378 residues: Sphingosine 1-phosphate receptor 3 (378 aa).

Residues 1–44 (MATTHAQGHQPVLGNDTLREHYDYVGKLAGRLRDPPEGGTLITT) are Extracellular-facing. N-linked (GlcNAc...) asparagine glycosylation occurs at asparagine 15. The chain crosses the membrane as a helical span at residues 45–65 (ILFLVTCSFIVLENLMVLIAI). At 66–74 (WKNNKFHNR) the chain is on the cytoplasmic side. A helical transmembrane segment spans residues 75 to 95 (MYFFIGNLALCDLLAGIAYKV). Residues 96-115 (NILMSGRKTFSLSPTVWFLR) are Extracellular-facing. The chain crosses the membrane as a helical span at residues 116–136 (EGSMFVALGASTCSLLAIAIE). At 137 to 154 (RHLTMIKMRPYDANKKHR) the chain is on the cytoplasmic side. The chain crosses the membrane as a helical span at residues 155–175 (VFLLIGMCWLIAFSLGALPIL). Topologically, residues 176 to 196 (GWNCLENFPDCSTILPLYSKK) are extracellular. Residues 197–217 (YIAFLISIFTAILVTIVILYA) form a helical membrane-spanning segment. The Cytoplasmic portion of the chain corresponds to 218 to 244 (RIYCLVKSSSRRVANHNSERSMALLRT). The helical transmembrane segment at 245-265 (VVIVVSVFIACWSPLFILFLI) threads the bilayer. Residues 266-281 (DVACRAKECSILFKSQ) lie on the Extracellular side of the membrane. A helical transmembrane segment spans residues 282 to 302 (WFIMLAVLNSAMNPVIYTLAS). Over 303-378 (KEMRRAFFRL…RSFQNGVLCK (76 aa)) the chain is Cytoplasmic. The segment at 323 to 354 (TQASPMQPALDPSRSKSSSSNNSSHSPKVKED) is disordered. Serine 326 carries the post-translational modification Phosphoserine. Over residues 337 to 348 (SKSSSSNNSSHS) the composition is skewed to low complexity.

It belongs to the G-protein coupled receptor 1 family. Most abundant in heart, lung, kidney and spleen; low but detectable in brain, thymus, muscle and testis; and nearly undetectable in liver, stomach, and intestine. Expressed in embryonic lung from embryonic day 14-18. Also abundantly detected in embryonic nasal cartilage, sphenoid bone, vena cava, Meckel's cartilage/incisor teeth, genital tubercle and bladder.

It localises to the cell membrane. Its function is as follows. Receptor for the lysosphingolipid sphingosine 1-phosphate (S1P). S1P is a bioactive lysophospholipid that elicits diverse physiological effect on most types of cells and tissues. This Mus musculus (Mouse) protein is Sphingosine 1-phosphate receptor 3 (S1pr3).